Consider the following 419-residue polypeptide: UDP-N-acetylglucosamine 1-carboxyvinyltransferase (419 aa).

K22–N23 is a phosphoenolpyruvate binding site. Position 93 (R93) interacts with UDP-N-acetyl-alpha-D-glucosamine. C117 functions as the Proton donor in the catalytic mechanism. C117 is subject to 2-(S-cysteinyl)pyruvic acid O-phosphothioketal. D307 and I329 together coordinate UDP-N-acetyl-alpha-D-glucosamine.

The protein belongs to the EPSP synthase family. MurA subfamily.

Its subcellular location is the cytoplasm. The catalysed reaction is phosphoenolpyruvate + UDP-N-acetyl-alpha-D-glucosamine = UDP-N-acetyl-3-O-(1-carboxyvinyl)-alpha-D-glucosamine + phosphate. It participates in cell wall biogenesis; peptidoglycan biosynthesis. Its function is as follows. Cell wall formation. Adds enolpyruvyl to UDP-N-acetylglucosamine. This chain is UDP-N-acetylglucosamine 1-carboxyvinyltransferase, found in Shewanella sediminis (strain HAW-EB3).